The chain runs to 1039 residues: MSERAKLQKKKKVTEDLLDSLLLLPPWRNFAISQSHQSIIESSSQRLPEKMRIDENEGVSASSKHLVFAYYVTGHGFGHATRVVEVVRHLIAAGHDVHVVTGAPDFVFTSEIQSPRLKIRKVLLDCGAVQADALTVDRLASLEKYVETAVVPRAEILETEVEWLHSIKADFVVSDVVPVACRAAADAGIRSVCVTNFSWDFIYAEYVMAAGYHHRSIVWQIAEDYSHCEFLIRLPGYCPMPAFRDVIDVPLVVRRLHKSRKEVRKELGIAEDVNVVILNFGGQPSGWNLKETSLPTGWLCLVCGASETLELPPNFIKLAKDAYTPDIIAASDCMLGKIGYGTVSEALSYKVPFVFVRRDYFNEEPFLRNMLEFYQCGVEMIRRDLLMGQWTPYLERAVSLKPCYEGGINGGEIAAHILQETAIGRHCASDKLSGARRLRDAIILGYQLQRVPGRDIAIPEWYSRAENELGQSAGSSPTVQANENNSLVESCIDDFDILQGDVQGLSDTCTFLKSLAMLDAIHDSEKSTEKKTVRERKAAGGLFNWEEEIFVARAPGRLDVMGGIADYSGSLVLQMPIREACHVAVQRNLPGKHRLWKHAQARQQAKGQVPTPVLQIVSYGSEISNRAPTFDMDLSDFMDGDEPISYEKARKFFAQDPAQKWAAYVAGTILVLMIELGVRFEDSISLLVSSAVPEGKGVSSSAAVEVASMSAIAAAHGLSIDPRDLAILCQKVENHIVGAPCGVMDQMTSSCGEANKLLAMICQPAEVVGLVEIPNHVRFWGIDSGIRHSVGGADYRSVRVGAYMGRKMIKSMASSILSPSASSANGGNPEELEDEGIDLLEAEASLDYLCNLSPHRYEARYADKLPDIMLGQTFIEEYADHDDPVTVIDQKRSYSVKAPARHPIYENFRVKTFKALLTSATSDEQLTALGGLLYQCHYSYSACGLGSDGTNRLVQLVQGMQHNKSNSEDGTLYGAKITGGGSGGTVCVVGRNSLRSSQQILEIQQRYKAATGYLPLIFEGSSPGAGKFGYLRIRRRISL.

Residues A662–V678 traverse the membrane as a helical segment. ATP is bound at residue P693–A703. Catalysis depends on D745, which acts as the Proton acceptor.

It belongs to the GHMP kinase family.

The protein localises to the membrane. It carries out the reaction L-arabinose + ATP = beta-L-arabinose 1-phosphate + ADP + H(+). In terms of biological role, arabinose kinase. Involved in the salvage pathway which converts free L-arabinose to UDP-L-arabinose. May play a role in arabinose transport. The chain is L-arabinokinase (ARA1) from Arabidopsis thaliana (Mouse-ear cress).